A 184-amino-acid polypeptide reads, in one-letter code: Probable RNA 2'-phosphotransferase (184 aa).

The protein belongs to the KptA/TPT1 family.

Its function is as follows. Removes the 2'-phosphate from RNA via an intermediate in which the phosphate is ADP-ribosylated by NAD followed by a presumed transesterification to release the RNA and generate ADP-ribose 1''-2''-cyclic phosphate (APPR&gt;P). May function as an ADP-ribosylase. The sequence is that of Probable RNA 2'-phosphotransferase from Escherichia coli O139:H28 (strain E24377A / ETEC).